Here is a 258-residue protein sequence, read N- to C-terminus: Alpha- and beta-fibrinogenase stejnefibrase-1 (258 aa).

An N-terminal signal peptide occupies residues 1 to 18 (MELIRVLANLLILQLSYA). A propeptide spanning residues 19-24 (QKSSEL) is cleaved from the precursor. The Peptidase S1 domain maps to 25–249 (IIGGDECNID…HLDWIQNIIA (225 aa)). 6 disulfide bridges follow: cysteine 31–cysteine 163, cysteine 50–cysteine 66, cysteine 98–cysteine 256, cysteine 142–cysteine 210, cysteine 174–cysteine 189, and cysteine 200–cysteine 225. Residue histidine 65 is the Charge relay system of the active site. Residue asparagine 103 is glycosylated (N-linked (GlcNAc...) asparagine). Catalysis depends on aspartate 110, which acts as the Charge relay system. N-linked (GlcNAc...) asparagine glycans are attached at residues asparagine 121, asparagine 122, asparagine 154, and asparagine 170. Catalysis depends on serine 204, which acts as the Charge relay system.

This sequence belongs to the peptidase S1 family. Snake venom subfamily. In terms of assembly, monomer. In terms of tissue distribution, expressed by the venom gland.

It is found in the secreted. With respect to regulation, its activity is inhibited by PMSF and p-nitrophenyl-p-guanidinobenzoate (NPGB). Functionally, snake venom serine protease. Degrades concomitantly alpha- (FGA) and beta-chains of fibrinogen (FGB). This is Alpha- and beta-fibrinogenase stejnefibrase-1 from Trimeresurus stejnegeri (Chinese green tree viper).